Consider the following 234-residue polypeptide: Phosphoribosylformylglycinamidine synthase subunit PurQ (234 aa).

Residues 5-234 enclose the Glutamine amidotransferase type-1 domain; that stretch reads TVGIVVFPGS…ESLFAHLAGA (230 aa). The Nucleophile role is filled by C89. Active-site residues include H206 and E208.

As to quaternary structure, part of the FGAM synthase complex composed of 1 PurL, 1 PurQ and 2 PurS subunits.

Its subcellular location is the cytoplasm. It catalyses the reaction N(2)-formyl-N(1)-(5-phospho-beta-D-ribosyl)glycinamide + L-glutamine + ATP + H2O = 2-formamido-N(1)-(5-O-phospho-beta-D-ribosyl)acetamidine + L-glutamate + ADP + phosphate + H(+). The catalysed reaction is L-glutamine + H2O = L-glutamate + NH4(+). It participates in purine metabolism; IMP biosynthesis via de novo pathway; 5-amino-1-(5-phospho-D-ribosyl)imidazole from N(2)-formyl-N(1)-(5-phospho-D-ribosyl)glycinamide: step 1/2. Functionally, part of the phosphoribosylformylglycinamidine synthase complex involved in the purines biosynthetic pathway. Catalyzes the ATP-dependent conversion of formylglycinamide ribonucleotide (FGAR) and glutamine to yield formylglycinamidine ribonucleotide (FGAM) and glutamate. The FGAM synthase complex is composed of three subunits. PurQ produces an ammonia molecule by converting glutamine to glutamate. PurL transfers the ammonia molecule to FGAR to form FGAM in an ATP-dependent manner. PurS interacts with PurQ and PurL and is thought to assist in the transfer of the ammonia molecule from PurQ to PurL. In Chlorobaculum tepidum (strain ATCC 49652 / DSM 12025 / NBRC 103806 / TLS) (Chlorobium tepidum), this protein is Phosphoribosylformylglycinamidine synthase subunit PurQ.